A 140-amino-acid polypeptide reads, in one-letter code: Putative pre-16S rRNA nuclease (140 aa).

Belongs to the YqgF nuclease family.

It localises to the cytoplasm. In terms of biological role, could be a nuclease involved in processing of the 5'-end of pre-16S rRNA. This chain is Putative pre-16S rRNA nuclease, found in Yersinia enterocolitica serotype O:8 / biotype 1B (strain NCTC 13174 / 8081).